The chain runs to 424 residues: 3-phosphoshikimate 1-carboxyvinyltransferase (424 aa).

3-phosphoshikimate is bound by residues K21, S22, and R26. K21 is a phosphoenolpyruvate binding site. Positions 92 and 120 each coordinate phosphoenolpyruvate. 3-phosphoshikimate is bound by residues S163, S164, Q165, S191, D306, and K333. Residue Q165 participates in phosphoenolpyruvate binding. The active-site Proton acceptor is the D306. Residues R337, R379, and K405 each coordinate phosphoenolpyruvate.

It belongs to the EPSP synthase family. As to quaternary structure, monomer.

It localises to the cytoplasm. It carries out the reaction 3-phosphoshikimate + phosphoenolpyruvate = 5-O-(1-carboxyvinyl)-3-phosphoshikimate + phosphate. It participates in metabolic intermediate biosynthesis; chorismate biosynthesis; chorismate from D-erythrose 4-phosphate and phosphoenolpyruvate: step 6/7. In terms of biological role, catalyzes the transfer of the enolpyruvyl moiety of phosphoenolpyruvate (PEP) to the 5-hydroxyl of shikimate-3-phosphate (S3P) to produce enolpyruvyl shikimate-3-phosphate and inorganic phosphate. This is 3-phosphoshikimate 1-carboxyvinyltransferase from Clostridium perfringens (strain SM101 / Type A).